The following is a 360-amino-acid chain: Peptide chain release factor 1 (360 aa).

Glutamine 237 carries the N5-methylglutamine modification.

It belongs to the prokaryotic/mitochondrial release factor family. Post-translationally, methylated by PrmC. Methylation increases the termination efficiency of RF1.

It localises to the cytoplasm. Functionally, peptide chain release factor 1 directs the termination of translation in response to the peptide chain termination codons UAG and UAA. The protein is Peptide chain release factor 1 of Pseudomonas entomophila (strain L48).